The chain runs to 226 residues: MILHIPEVLSKEQLTECRNLLNKANWIDGKITAGNQAINAKNNFQLAESDPLTNYLRDIIKTALNSNPLFISAALPKHIISPFFNKYENGGNYGNHVDNSILFDMNEKKAFRTDISCSLFFTDPEEYEGGEMVIEDTFGTHEVKLPAGDLILYPSTSLHRVEPVTKGVRMVSFMWIQSMIRSAWKRSILFELDNTIQSLRVNYGEIEETLNLSIHYHKLIQEWSEL.

Positions 78–178 constitute a Fe2OG dioxygenase domain; that stretch reads HIISPFFNKY…RMVSFMWIQS (101 aa). Fe cation contacts are provided by His96, Asp98, and His159. Residue Arg169 coordinates 2-oxoglutarate.

Requires Fe(2+) as cofactor. L-ascorbate is required as a cofactor.

The polypeptide is PKHD-type hydroxylase Abu_0724 (Aliarcobacter butzleri (strain RM4018) (Arcobacter butzleri)).